A 278-amino-acid polypeptide reads, in one-letter code: tRNA(Phe) (4-demethylwyosine(37)-C(7)) aminocarboxypropyltransferase (278 aa).

S-adenosyl-L-methionine contacts are provided by residues Ser-109, Arg-116, Glu-155, and 183-184 (DN).

This sequence belongs to the class I-like SAM-binding methyltransferase superfamily. TRM5/TYW2 family.

Its subcellular location is the cytoplasm. The catalysed reaction is 4-demethylwyosine(37) in tRNA(Phe) + S-adenosyl-L-methionine = 4-demethyl-7-[(3S)-3-amino-3-carboxypropyl]wyosine(37) in tRNA(Phe) + S-methyl-5'-thioadenosine + H(+). S-adenosyl-L-methionine-dependent transferase that acts as a component of the wyosine derivatives biosynthesis pathway. Catalyzes the transfer of the alpha-amino-alpha-carboxypropyl (acp) group from S-adenosyl-L-methionine to 4-demethylwyosine (imG-14), forming 7-aminocarboxypropyl-demethylwyosine (wybutosine-86) at position 37 of tRNA(Phe). This Pyrococcus horikoshii (strain ATCC 700860 / DSM 12428 / JCM 9974 / NBRC 100139 / OT-3) protein is tRNA(Phe) (4-demethylwyosine(37)-C(7)) aminocarboxypropyltransferase.